Reading from the N-terminus, the 839-residue chain is Protein translocase subunit SecA (839 aa).

ATP-binding positions include Q86, 104–108 (GEGKT), and D493. The segment at 794–839 (GIDMDNLQTSGPSDRPDPETSGDADPKNRAQRRAQEQERKRQNKKQ) is disordered. Residues 807–833 (DRPDPETSGDADPKNRAQRRAQEQERK) show a composition bias toward basic and acidic residues.

The protein belongs to the SecA family. Monomer and homodimer. Part of the essential Sec protein translocation apparatus which comprises SecA, SecYEG and auxiliary proteins SecDF. Other proteins may also be involved.

The protein localises to the cell membrane. It is found in the cytoplasm. It carries out the reaction ATP + H2O + cellular proteinSide 1 = ADP + phosphate + cellular proteinSide 2.. Part of the Sec protein translocase complex. Interacts with the SecYEG preprotein conducting channel. Has a central role in coupling the hydrolysis of ATP to the transfer of proteins into and across the cell membrane, serving as an ATP-driven molecular motor driving the stepwise translocation of polypeptide chains across the membrane. This Brevibacillus brevis (strain 47 / JCM 6285 / NBRC 100599) protein is Protein translocase subunit SecA.